A 157-amino-acid chain; its full sequence is MGYPTLWTDDAKLFEWTKTEQRFNHDDFYGSMPTLTKNLRQGQPVAGSKVHTDYSNGFLNEYSLNQGIVDFGTFKSAITDYHGYEYKNHGYGLALTDTDLLGGSSGSLVFNQDKKISSIYSAATESDSVGYAQLLPVPKDVNGVSLVKYSYDLILWW.

This sequence belongs to the MG067/MG068/MG395 family.

This is an uncharacterized protein from Mycoplasma pneumoniae (strain ATCC 29342 / M129 / Subtype 1) (Mycoplasmoides pneumoniae).